The chain runs to 156 residues: ATP synthase subunit b (156 aa).

A helical transmembrane segment spans residues 11–31 (AIAFFIFVVFCMKYVWPPLMA).

The protein belongs to the ATPase B chain family. F-type ATPases have 2 components, F(1) - the catalytic core - and F(0) - the membrane proton channel. F(1) has five subunits: alpha(3), beta(3), gamma(1), delta(1), epsilon(1). F(0) has three main subunits: a(1), b(2) and c(10-14). The alpha and beta chains form an alternating ring which encloses part of the gamma chain. F(1) is attached to F(0) by a central stalk formed by the gamma and epsilon chains, while a peripheral stalk is formed by the delta and b chains.

It is found in the cell inner membrane. Functionally, f(1)F(0) ATP synthase produces ATP from ADP in the presence of a proton or sodium gradient. F-type ATPases consist of two structural domains, F(1) containing the extramembraneous catalytic core and F(0) containing the membrane proton channel, linked together by a central stalk and a peripheral stalk. During catalysis, ATP synthesis in the catalytic domain of F(1) is coupled via a rotary mechanism of the central stalk subunits to proton translocation. Component of the F(0) channel, it forms part of the peripheral stalk, linking F(1) to F(0). This is ATP synthase subunit b from Aeromonas hydrophila subsp. hydrophila (strain ATCC 7966 / DSM 30187 / BCRC 13018 / CCUG 14551 / JCM 1027 / KCTC 2358 / NCIMB 9240 / NCTC 8049).